The primary structure comprises 358 residues: 3-isopropylmalate dehydrogenase (358 aa).

76–89 (GPRWDNLTGAERPE) contributes to the NAD(+) binding site. Residues Arg-96, Arg-106, Arg-135, and Asp-225 each contribute to the substrate site. Mg(2+) contacts are provided by Asp-225, Asp-249, and Asp-253. Position 283-295 (283-295 (GSAPDIAGQNKAN)) interacts with NAD(+).

This sequence belongs to the isocitrate and isopropylmalate dehydrogenases family. LeuB type 1 subfamily. Homodimer. Mg(2+) serves as cofactor. Mn(2+) is required as a cofactor.

Its subcellular location is the cytoplasm. It carries out the reaction (2R,3S)-3-isopropylmalate + NAD(+) = 4-methyl-2-oxopentanoate + CO2 + NADH. It participates in amino-acid biosynthesis; L-leucine biosynthesis; L-leucine from 3-methyl-2-oxobutanoate: step 3/4. In terms of biological role, catalyzes the oxidation of 3-carboxy-2-hydroxy-4-methylpentanoate (3-isopropylmalate) to 3-carboxy-4-methyl-2-oxopentanoate. The product decarboxylates to 4-methyl-2 oxopentanoate. The sequence is that of 3-isopropylmalate dehydrogenase from Oleidesulfovibrio alaskensis (strain ATCC BAA-1058 / DSM 17464 / G20) (Desulfovibrio alaskensis).